Here is a 355-residue protein sequence, read N- to C-terminus: Zinc finger A20 and AN1 domain-containing stress-associated protein 3 (355 aa).

Residues 199–233 form an A20-type zinc finger; sequence AGQPVLCASGCGFYGNPATLDMCSVCYRQHCLLNG. Cys205, Cys209, Cys221, Cys224, Cys295, Cys298, Cys309, Cys311, Cys316, His319, His325, and Cys327 together coordinate Zn(2+). The AN1-type zinc-finger motif lies at 289-335; that stretch reads KAPANRCASCKKKVGLLGFACRCGATYCGTHRYPEKHACGFDFKGAS.

May be involved in environmental stress response. This is Zinc finger A20 and AN1 domain-containing stress-associated protein 3 (SAP3) from Oryza sativa subsp. japonica (Rice).